The sequence spans 386 residues: Methionine aminotransferase (386 aa).

Position 236 is an N6-(pyridoxal phosphate)lysine (K236).

It belongs to the class-I pyridoxal-phosphate-dependent aminotransferase family. As to quaternary structure, homodimer. The cofactor is pyridoxal 5'-phosphate.

It localises to the cytoplasm. The catalysed reaction is a 2-oxocarboxylate + L-methionine = 4-methylsulfanyl-2-oxobutanoate + an L-alpha-amino acid. In terms of biological role, shows aminotransferase activity with methionine and histidine as substrates, and to a lesser extent also with phenylalanine. This Escherichia coli (strain K12) protein is Methionine aminotransferase (ybdL).